A 494-amino-acid chain; its full sequence is Aspartyl/glutamyl-tRNA(Asn/Gln) amidotransferase subunit B (494 aa).

It belongs to the GatB/GatE family. GatB subfamily. As to quaternary structure, heterotrimer of A, B and C subunits.

The enzyme catalyses L-glutamyl-tRNA(Gln) + L-glutamine + ATP + H2O = L-glutaminyl-tRNA(Gln) + L-glutamate + ADP + phosphate + H(+). It catalyses the reaction L-aspartyl-tRNA(Asn) + L-glutamine + ATP + H2O = L-asparaginyl-tRNA(Asn) + L-glutamate + ADP + phosphate + 2 H(+). Functionally, allows the formation of correctly charged Asn-tRNA(Asn) or Gln-tRNA(Gln) through the transamidation of misacylated Asp-tRNA(Asn) or Glu-tRNA(Gln) in organisms which lack either or both of asparaginyl-tRNA or glutaminyl-tRNA synthetases. The reaction takes place in the presence of glutamine and ATP through an activated phospho-Asp-tRNA(Asn) or phospho-Glu-tRNA(Gln). The protein is Aspartyl/glutamyl-tRNA(Asn/Gln) amidotransferase subunit B of Synechococcus sp. (strain CC9605).